Consider the following 164-residue polypeptide: Oocyte-expressed protein homolog (164 aa).

The region spanning 44 to 105 is the KH; atypical domain; that stretch reads PLVLYMEAWV…SAQTRMKNIL (62 aa).

This sequence belongs to the KHDC1 family. Component of the subcortical maternal complex (SCMC), at least composed of NLRP5, KHDC3, OOEP, and TLE6. Within the complex, interacts with NLRP5, KHDC3 and TLE6. The SCMC may facilitate translocation of its components between the nuclear and cytoplasmic compartments. As part of the SCMC interacts with the SCMC-associated protein NLRP4F. Forms a scaffold complex with KHDC3/FILIA, and interacts with BLM and TRIM25 at DNA replication forks. Expressed in ovaries, where it is restricted to growing oocytes, with greatest levels in fully grown oocytes.

It is found in the cytoplasm. The protein localises to the nucleus. Its function is as follows. Component of the subcortical maternal complex (SCMC), a multiprotein complex that plays a key role in early embryonic development. The SCMC complex is a structural constituent of cytoplasmic lattices, which consist in fibrous structures found in the cytoplasm of oocytes and preimplantation embryos. They are required to store maternal proteins critical for embryonic development, such as proteins that control epigenetic reprogramming of the preimplantation embryo, and prevent their degradation or activation. As part of the OOEP-KHDC3 scaffold, recruits BLM and TRIM25 to DNA replication forks, thereby promoting the ubiquitination of BLM by TRIM25, enhancing BLM retainment at replication forks and therefore promoting stalled replication fork restart. Positively regulates the homologous recombination-mediated DNA double-strand break (DSB) repair pathway by regulating ATM activation and RAD51 recruitment to DSBs in oocytes. Thereby contributes to oocyte survival and the resumption and completion of meiosis. The chain is Oocyte-expressed protein homolog from Mus musculus (Mouse).